The following is a 431-amino-acid chain: Arginine biosynthesis bifunctional protein ArgJ, mitochondrial (431 aa).

Residues Thr-174, Lys-200, Thr-211, Glu-297, Asn-426, and Thr-431 each contribute to the substrate site. Thr-211 acts as the Nucleophile in catalysis.

Belongs to the ArgJ family. Heterodimer of an alpha and a beta chain. Post-translationally, the alpha and beta chains are autoproteolytically processed from a single precursor protein within the mitochondrion.

The protein localises to the mitochondrion matrix. It catalyses the reaction N(2)-acetyl-L-ornithine + L-glutamate = N-acetyl-L-glutamate + L-ornithine. The enzyme catalyses L-glutamate + acetyl-CoA = N-acetyl-L-glutamate + CoA + H(+). Its pathway is amino-acid biosynthesis; L-arginine biosynthesis; L-ornithine and N-acetyl-L-glutamate from L-glutamate and N(2)-acetyl-L-ornithine (cyclic): step 1/1. The protein operates within amino-acid biosynthesis; L-arginine biosynthesis; N(2)-acetyl-L-ornithine from L-glutamate: step 1/4. Its function is as follows. Catalyzes two activities which are involved in the cyclic version of arginine biosynthesis: the synthesis of acetylglutamate from glutamate and acetyl-CoA, and of ornithine by transacetylation between acetylornithine and glutamate. This chain is Arginine biosynthesis bifunctional protein ArgJ, mitochondrial, found in Yarrowia lipolytica (strain CLIB 122 / E 150) (Yeast).